Consider the following 72-residue polypeptide: Seed trypsin/chymotrypsin inhibitor IVB (72 aa).

Cystine bridges form between Cys8–Cys61, Cys9–Cys24, Cys12–Cys57, Cys14–Cys22, Cys31–Cys38, Cys35–Cys50, and Cys40–Cys48.

It belongs to the Bowman-Birk serine protease inhibitor family. Seed.

In terms of biological role, inhibitor of trypsin and of chymotrypsin. May function as a natural phytochemical defense against predators. The polypeptide is Seed trypsin/chymotrypsin inhibitor IVB (Pisum sativum (Garden pea)).